We begin with the raw amino-acid sequence, 475 residues long: Trifunctional enzyme subunit beta, mitochondrial (475 aa).

Residues 1–34 (MTTILTCPFKKLPTTSKWALRFAIRPLSCSSQLR) constitute a mitochondrion transit peptide. At Lys73 the chain carries N6-acetyllysine; alternate. At Lys73 the chain carries N6-succinyllysine; alternate. The active-site Acyl-thioester intermediate is the Cys139. The stretch at 174–221 (IRHSRKMRKLMLDLNKAKSMGQRLSLISKFRLNFLAPELPAVAEFSTS) is an intramembrane region. Lys189 bears the N6-acetyllysine; alternate mark. At Lys189 the chain carries N6-succinyllysine; alternate. Lys191, Lys273, and Lys292 each carry N6-succinyllysine. The residue at position 294 (Lys294) is an N6-acetyllysine; alternate. Lys294 is subject to N6-succinyllysine; alternate. Lys299 carries the post-translational modification N6-acetyllysine. Residue Lys333 is modified to N6-acetyllysine; alternate. At Lys333 the chain carries N6-succinyllysine; alternate. 2 positions are modified to N6-acetyllysine: Lys349 and Lys362. The active-site Proton donor/acceptor is Cys459.

Belongs to the thiolase-like superfamily. Thiolase family. In terms of assembly, heterotetramer of 2 alpha/HADHA and 2 beta/HADHB subunits; forms the mitochondrial trifunctional enzyme. Also purified as higher order heterooligomers including a 4 alpha/HADHA and 4 beta/HADHB heterooligomer which physiological significance remains unclear. The mitochondrial trifunctional enzyme interacts with MTLN. Interacts with RSAD2/viperin.

The protein resides in the mitochondrion. Its subcellular location is the mitochondrion inner membrane. It localises to the mitochondrion outer membrane. It is found in the endoplasmic reticulum. It carries out the reaction an acyl-CoA + acetyl-CoA = a 3-oxoacyl-CoA + CoA. It catalyses the reaction butanoyl-CoA + acetyl-CoA = 3-oxohexanoyl-CoA + CoA. The catalysed reaction is hexanoyl-CoA + acetyl-CoA = 3-oxooctanoyl-CoA + CoA. The enzyme catalyses octanoyl-CoA + acetyl-CoA = 3-oxodecanoyl-CoA + CoA. It carries out the reaction decanoyl-CoA + acetyl-CoA = 3-oxododecanoyl-CoA + CoA. It catalyses the reaction dodecanoyl-CoA + acetyl-CoA = 3-oxotetradecanoyl-CoA + CoA. The catalysed reaction is tetradecanoyl-CoA + acetyl-CoA = 3-oxohexadecanoyl-CoA + CoA. Its pathway is lipid metabolism; fatty acid beta-oxidation. Its function is as follows. Mitochondrial trifunctional enzyme catalyzes the last three of the four reactions of the mitochondrial beta-oxidation pathway. The mitochondrial beta-oxidation pathway is the major energy-producing process in tissues and is performed through four consecutive reactions breaking down fatty acids into acetyl-CoA. Among the enzymes involved in this pathway, the trifunctional enzyme exhibits specificity for long-chain fatty acids. Mitochondrial trifunctional enzyme is a heterotetrameric complex composed of two proteins, the trifunctional enzyme subunit alpha/HADHA carries the 2,3-enoyl-CoA hydratase and the 3-hydroxyacyl-CoA dehydrogenase activities, while the trifunctional enzyme subunit beta/HADHB described here bears the 3-ketoacyl-CoA thiolase activity. This chain is Trifunctional enzyme subunit beta, mitochondrial (HADHB), found in Macaca fascicularis (Crab-eating macaque).